We begin with the raw amino-acid sequence, 355 residues long: Uroporphyrinogen decarboxylase (355 aa).

Substrate is bound by residues 27-31 (RQAGR), Asp77, Tyr154, Thr209, and His327.

It belongs to the uroporphyrinogen decarboxylase family. In terms of assembly, homodimer.

It is found in the cytoplasm. It carries out the reaction uroporphyrinogen III + 4 H(+) = coproporphyrinogen III + 4 CO2. It participates in porphyrin-containing compound metabolism; protoporphyrin-IX biosynthesis; coproporphyrinogen-III from 5-aminolevulinate: step 4/4. Its function is as follows. Catalyzes the decarboxylation of four acetate groups of uroporphyrinogen-III to yield coproporphyrinogen-III. The protein is Uroporphyrinogen decarboxylase of Aeromonas salmonicida (strain A449).